The sequence spans 453 residues: Ribulose bisphosphate carboxylase large chain (453 aa).

A propeptide spanning residues 1–2 (MS) is cleaved from the precursor. N-acetylproline is present on Pro3. An N6,N6,N6-trimethyllysine modification is found at Lys14. Substrate contacts are provided by Asn123 and Thr173. Residue Lys175 is the Proton acceptor of the active site. Residue Lys177 participates in substrate binding. Residues Lys201, Asp203, and Glu204 each contribute to the Mg(2+) site. An N6-carboxylysine modification is found at Lys201. His294 (proton acceptor) is an active-site residue. Substrate is bound by residues Arg295, His327, and Ser379.

The protein belongs to the RuBisCO large chain family. Type I subfamily. Heterohexadecamer of 8 large chains and 8 small chains; disulfide-linked. The disulfide link is formed within the large subunit homodimers. Requires Mg(2+) as cofactor. The disulfide bond which can form in the large chain dimeric partners within the hexadecamer appears to be associated with oxidative stress and protein turnover.

It is found in the plastid. The protein resides in the chloroplast. It catalyses the reaction 2 (2R)-3-phosphoglycerate + 2 H(+) = D-ribulose 1,5-bisphosphate + CO2 + H2O. The enzyme catalyses D-ribulose 1,5-bisphosphate + O2 = 2-phosphoglycolate + (2R)-3-phosphoglycerate + 2 H(+). Its function is as follows. RuBisCO catalyzes two reactions: the carboxylation of D-ribulose 1,5-bisphosphate, the primary event in carbon dioxide fixation, as well as the oxidative fragmentation of the pentose substrate in the photorespiration process. Both reactions occur simultaneously and in competition at the same active site. This is Ribulose bisphosphate carboxylase large chain from Galium parisiense (Wall bedstraw).